Consider the following 239-residue polypeptide: 7-cyano-7-deazaguanine synthase (239 aa).

Residue 8 to 18 (FSGGLDSTASL) coordinates ATP. Residues Cys-194, Cys-209, Cys-212, and Cys-215 each contribute to the Zn(2+) site.

It belongs to the QueC family.

It catalyses the reaction 7-carboxy-7-deazaguanine + NH4(+) + ATP = 7-cyano-7-deazaguanine + ADP + phosphate + H2O + H(+). It functions in the pathway purine metabolism; 7-cyano-7-deazaguanine biosynthesis. In terms of biological role, catalyzes the ATP-dependent conversion of 7-carboxy-7-deazaguanine (CDG) to 7-cyano-7-deazaguanine (preQ(0)). The chain is 7-cyano-7-deazaguanine synthase from Pyrococcus abyssi (strain GE5 / Orsay).